The primary structure comprises 459 residues: Transcriptional coactivator YAP1 (459 aa).

A phosphoserine; by LATS1 and LATS2 mark is found at S21, S69, S87, and S119. Disordered regions lie at residues 51-88 (LPDSFFKPPEPKSHSRQASTDAGSGGVLTPHHVRAHSS) and 103-129 (SGMASAGASPQHLRQSSYEIPDDVPLP). WW domains follow at residues 126–159 (VPLPPGWEMAKTSSGQRYFLNHIDQTTTWQDPRK) and 186–219 (GPLPEGWEQAITPEGEIYYINHKNKTTSWLDPRL). Disordered regions lie at residues 231–254 (TQSAPVKQGGPLPPNPHGGVMGGN) and 307–364 (PTSM…SSYS). Positions 247 to 459 (HGGVMGGNNQ…IDKESFLTWL (213 aa)) are transactivation domain. Polar residues-rich tracts occupy residues 307-347 (PTSM…SGTY) and 355-364 (DSGLSMSSYS).

It belongs to the YAP1 family. In terms of processing, phosphorylated by lats1 and lats2; leading to cytoplasmic translocation and inactivation. Ubiquitously expressed throughout development.

The protein localises to the cytoplasm. The protein resides in the nucleus. It localises to the cell junction. It is found in the tight junction. Its subcellular location is the cell membrane. Its function is as follows. Transcriptional regulator which can act both as a coactivator and a corepressor and is the critical downstream regulatory target in the Hippo signaling pathway that plays a pivotal role in organ size control and tumor suppression by restricting proliferation and promoting apoptosis. Plays a key role in tissue tension and 3D tissue shape by regulating cortical actomyosin network formation. This Oryzias latipes (Japanese rice fish) protein is Transcriptional coactivator YAP1.